The following is a 337-amino-acid chain: tRNA N6-adenosine threonylcarbamoyltransferase (337 aa).

Residues His111 and His115 each coordinate Fe cation. Substrate-binding positions include 134–138 (LVSGG), Asp167, Gly180, and Asn272. Position 300 (Asp300) interacts with Fe cation.

The protein belongs to the KAE1 / TsaD family. It depends on Fe(2+) as a cofactor.

The protein localises to the cytoplasm. It carries out the reaction L-threonylcarbamoyladenylate + adenosine(37) in tRNA = N(6)-L-threonylcarbamoyladenosine(37) in tRNA + AMP + H(+). Its function is as follows. Required for the formation of a threonylcarbamoyl group on adenosine at position 37 (t(6)A37) in tRNAs that read codons beginning with adenine. Is involved in the transfer of the threonylcarbamoyl moiety of threonylcarbamoyl-AMP (TC-AMP) to the N6 group of A37, together with TsaE and TsaB. TsaD likely plays a direct catalytic role in this reaction. In Salmonella newport (strain SL254), this protein is tRNA N6-adenosine threonylcarbamoyltransferase.